A 496-amino-acid chain; its full sequence is Alpha-amylase (496 aa).

C29 and C85 are oxidised to a cystine. Ca(2+) contacts are provided by N99, R155, and D164. A chloride-binding site is contributed by R192. The Nucleophile role is filled by D194. Residue H198 participates in Ca(2+) binding. Catalysis depends on E230, which acts as the Proton donor. R332 contributes to the chloride binding site. Intrachain disulfides connect C374-C380 and C448-C460.

It belongs to the glycosyl hydrolase 13 family. Monomer. The cofactor is Ca(2+). It depends on chloride as a cofactor. Disulfide bonds are present.

It localises to the secreted. It catalyses the reaction Endohydrolysis of (1-&gt;4)-alpha-D-glucosidic linkages in polysaccharides containing three or more (1-&gt;4)-alpha-linked D-glucose units.. Its activity is regulated as follows. Inhibited by alpha-amylase inhibitors from wheat and rye. The most effective inhibitors are the wheat tetrameric alpha-amylase inhibitor (WTAI) and the rye dimeric alpha-amylase inhibitor (RDAI-1). Not inhibited by alpha-amylase inhibitor from barley. Aids in the digestion of starch and glycogen derived from food, such as skin scales, fungi and bacteria. In Dermatophagoides pteronyssinus (European house dust mite), this protein is Alpha-amylase.